A 277-amino-acid chain; its full sequence is uncharacterized protein (277 aa).

Disordered stretches follow at residues K33 to R168 and N210 to F277. Over residues N34–S45 the composition is skewed to basic and acidic residues. Over residues L86–S99 the composition is skewed to basic residues. Basic and acidic residues-rich tracts occupy residues K100–V113, A151–R168, and T216–K230. A compositionally biased stretch (basic residues) spans D231–R241. Residues R242–N258 show a composition bias toward basic and acidic residues. Over residues K259–N271 the composition is skewed to polar residues.

Its subcellular location is the cytoplasm. This is an uncharacterized protein from Saccharomyces cerevisiae (strain ATCC 204508 / S288c) (Baker's yeast).